We begin with the raw amino-acid sequence, 1770 residues long: Transposon Ty2-GR1 Gag-Pol polyprotein (1770 aa).

3 stretches are compositionally biased toward polar residues: residues Met-1–His-11, Ala-19–Asn-39, and Lys-49–Thr-60. Disordered regions lie at residues Met-1 to Gln-86 and His-360 to His-453. The interval Glu-295 to His-397 is RNA-binding. Low complexity predominate over residues Thr-369–Arg-381. The span at Ile-399–Val-408 shows a compositional bias: polar residues. The active-site For protease activity; shared with dimeric partner is Asp-457. The interval Asn-579–Cys-636 is integrase-type zinc finger-like. In terms of domain architecture, Integrase catalytic spans Glu-656–Pro-831. Mg(2+)-binding residues include Asp-667 and Asp-732. Disordered regions lie at residues Met-1004–Glu-1034, Thr-1059–Lys-1135, Leu-1146–Asp-1165, and His-1170–Glu-1205. Polar residues-rich tracts occupy residues Glu-1009–Glu-1034 and Gln-1065–Ser-1082. Over residues Leu-1151–Asp-1165 the composition is skewed to basic and acidic residues. A Bipartite nuclear localization signal motif is present at residues Lys-1193–Arg-1227. A Reverse transcriptase Ty1/copia-type domain is found at Asn-1353 to Gln-1491. Residues Asp-1361, Asp-1442, Asp-1443, Asp-1625, Glu-1667, and Asp-1700 each contribute to the Mg(2+) site. Residues Asp-1625–Lys-1767 enclose the RNase H Ty1/copia-type domain.

The capsid protein forms a homotrimer, from which the VLPs are assembled. The protease is a homodimer, whose active site consists of two apposed aspartic acid residues. Initially, virus-like particles (VLPs) are composed of the structural unprocessed proteins Gag and Gag-Pol, and also contain the host initiator methionine tRNA (tRNA(i)-Met) which serves as a primer for minus-strand DNA synthesis, and a dimer of genomic Ty RNA. Processing of the polyproteins occurs within the particle and proceeds by an ordered pathway, called maturation. First, the protease (PR) is released by autocatalytic cleavage of the Gag-Pol polyprotein, and this cleavage is a prerequisite for subsequent processing at the remaining sites to release the mature structural and catalytic proteins. Maturation takes place prior to the RT reaction and is required to produce transposition-competent VLPs.

The protein localises to the cytoplasm. It is found in the nucleus. The enzyme catalyses DNA(n) + a 2'-deoxyribonucleoside 5'-triphosphate = DNA(n+1) + diphosphate. It carries out the reaction Endonucleolytic cleavage to 5'-phosphomonoester.. Capsid protein (CA) is the structural component of the virus-like particle (VLP), forming the shell that encapsulates the retrotransposons dimeric RNA genome. The particles are assembled from trimer-clustered units and there are holes in the capsid shells that allow for the diffusion of macromolecules. CA also has nucleocapsid-like chaperone activity, promoting primer tRNA(i)-Met annealing to the multipartite primer-binding site (PBS), dimerization of Ty2 RNA and initiation of reverse transcription. Its function is as follows. The aspartyl protease (PR) mediates the proteolytic cleavages of the Gag and Gag-Pol polyproteins after assembly of the VLP. In terms of biological role, reverse transcriptase/ribonuclease H (RT) is a multifunctional enzyme that catalyzes the conversion of the retro-elements RNA genome into dsDNA within the VLP. The enzyme displays a DNA polymerase activity that can copy either DNA or RNA templates, and a ribonuclease H (RNase H) activity that cleaves the RNA strand of RNA-DNA heteroduplexes during plus-strand synthesis and hydrolyzes RNA primers. The conversion leads to a linear dsDNA copy of the retrotransposon that includes long terminal repeats (LTRs) at both ends. Functionally, integrase (IN) targets the VLP to the nucleus, where a subparticle preintegration complex (PIC) containing at least integrase and the newly synthesized dsDNA copy of the retrotransposon must transit the nuclear membrane. Once in the nucleus, integrase performs the integration of the dsDNA into the host genome. This is Transposon Ty2-GR1 Gag-Pol polyprotein (TY2B-GR1) from Saccharomyces cerevisiae (strain ATCC 204508 / S288c) (Baker's yeast).